The following is a 1432-amino-acid chain: uncharacterized protein (1432 aa).

Disordered regions lie at residues 1-72 (MDTI…NYYN), 208-237 (NKIENNNNNNNNKINNENNNEKNKNNNNGQ), 280-335 (ERNE…ENNL), 531-607 (IVKS…NNSS), 690-712 (QNKSPLISPSLSKSNTTTTTTTT), 738-801 (NNTL…NGGR), 896-950 (QSNN…SPPT), 1044-1076 (NINSNSNNNNNNNNNNNNNNNNNNNNYNNNNNN), and 1303-1359 (NNNN…NTTP). Composition is skewed to low complexity over residues 14–72 (INNN…NYYN), 208–225 (NKIENNNNNNNNKINNEN), and 284–300 (LTSPASSLPSLPSLPSS). Positions 315–325 (QEEEEEEEEED) are enriched in acidic residues. 5 stretches are compositionally biased toward low complexity: residues 536 to 575 (SSSNLNKINQNNQNNNNNNIINNNNNNNNQNNTTTNNKNK), 583 to 607 (DNNTVFNNNTTTTNNNNNNNNNNSS), 691 to 712 (NKSPLISPSLSKSNTTTTTTTT), 744 to 779 (NMNNNNNNNNNNNNNNNNNNNNNNNNNNNNNNNSNN), and 896 to 944 (QSNN…SSSN). The segment covering 1311–1320 (NGNGNGGING) has biased composition (gly residues). The segment covering 1321 to 1333 (NNGNNSGSNNKEN) has biased composition (low complexity). The segment covering 1334–1346 (GGTGAGIGGGGGL) has biased composition (gly residues). Positions 1347–1359 (QLPNNNNNNNTTP) are enriched in low complexity.

This is an uncharacterized protein from Dictyostelium discoideum (Social amoeba).